Reading from the N-terminus, the 461-residue chain is Cysteine--tRNA ligase (461 aa).

C28 is a binding site for Zn(2+). Positions 30–40 match the 'HIGH' region motif; the sequence is ITVYDLCHIGH. 3 residues coordinate Zn(2+): C209, H234, and E238. Residues 266 to 270 carry the 'KMSKS' region motif; that stretch reads KMSKS. K269 contributes to the ATP binding site.

The protein belongs to the class-I aminoacyl-tRNA synthetase family. In terms of assembly, monomer. The cofactor is Zn(2+).

Its subcellular location is the cytoplasm. It carries out the reaction tRNA(Cys) + L-cysteine + ATP = L-cysteinyl-tRNA(Cys) + AMP + diphosphate. The chain is Cysteine--tRNA ligase from Shigella sonnei (strain Ss046).